The primary structure comprises 216 residues: Elongation factor Ts (216 aa).

The tract at residues 81 to 84 (TDFV) is involved in Mg(2+) ion dislocation from EF-Tu.

This sequence belongs to the EF-Ts family.

Its subcellular location is the cytoplasm. Its function is as follows. Associates with the EF-Tu.GDP complex and induces the exchange of GDP to GTP. It remains bound to the aminoacyl-tRNA.EF-Tu.GTP complex up to the GTP hydrolysis stage on the ribosome. The protein is Elongation factor Ts of Geotalea uraniireducens (strain Rf4) (Geobacter uraniireducens).